The sequence spans 212 residues: uncharacterized protein (212 aa).

The interval 47-129 is disordered; the sequence is RELLDRRRSQ…GNIDNGQPRR (83 aa).

This is an uncharacterized protein from Caenorhabditis elegans.